Consider the following 436-residue polypeptide: UPF0761 membrane protein Bxeno_A3061 (436 aa).

6 helical membrane passes run 42–62 (LVPLATVAFALFTAFPIFASF), 96–116 (GLTTIGMIFLFVTAVMTMMTV), 136–156 (ILVYWAIITLGPILIGVSLSI), 180–200 (ALAGAALPLTAAAFTILYVYL), 210–230 (AVIGGVTAAIAFELAKRGFGY), and 241–261 (VYGAFAAVPLFLLWMYLCWFI).

The protein belongs to the UPF0761 family.

The protein resides in the cell inner membrane. This chain is UPF0761 membrane protein Bxeno_A3061, found in Paraburkholderia xenovorans (strain LB400).